A 141-amino-acid polypeptide reads, in one-letter code: Calcium-binding protein SPEC 2D (141 aa).

4 consecutive EF-hand domains span residues 10–42 (DQIKEYKTKFDAFDRNNDGNFPTMFLGNAMKSV), 43–72 (GHVLTAAELENSRRVRKGTTTFPQFLAMIL), 73–107 (DKKCRKVFKAMDKDDKDKLLSADEVRQAMLSFDRQ), and 108–141 (ITEDKIKEMIEKADFPNDGKCSLEEFVKMVMNFC). Ca(2+)-binding residues include aspartate 23, asparagine 25, aspartate 27, and asparagine 29. Residues aspartate 84, aspartate 86, lysine 90, aspartate 95, aspartate 121, aspartate 125, lysine 127, and glutamate 132 each contribute to the Ca(2+) site.

As to expression, found in cell lineages giving rise to the aboral ectoderm, a squamous epithelium covering the surface of the late stage embryo and larva.

Its function is as follows. Calcium-binding protein involved in larval development and metamorphosis. Likely to function as calcium buffers mediating the transport of calcium from the sea water to the blastocoel where calcium is required for skeleton formation. This is Calcium-binding protein SPEC 2D (SPEC2D) from Strongylocentrotus purpuratus (Purple sea urchin).